The primary structure comprises 361 residues: Phosphoserine aminotransferase (361 aa).

R43 is a binding site for L-glutamate. Residues 77–78, W103, T153, D173, and Q196 each bind pyridoxal 5'-phosphate; that span reads AS. An N6-(pyridoxal phosphate)lysine modification is found at K197. Pyridoxal 5'-phosphate is bound at residue 238–239; sequence NT.

It belongs to the class-V pyridoxal-phosphate-dependent aminotransferase family. SerC subfamily. In terms of assembly, homodimer. Pyridoxal 5'-phosphate serves as cofactor.

It is found in the cytoplasm. The enzyme catalyses O-phospho-L-serine + 2-oxoglutarate = 3-phosphooxypyruvate + L-glutamate. It carries out the reaction 4-(phosphooxy)-L-threonine + 2-oxoglutarate = (R)-3-hydroxy-2-oxo-4-phosphooxybutanoate + L-glutamate. It participates in amino-acid biosynthesis; L-serine biosynthesis; L-serine from 3-phospho-D-glycerate: step 2/3. The protein operates within cofactor biosynthesis; pyridoxine 5'-phosphate biosynthesis; pyridoxine 5'-phosphate from D-erythrose 4-phosphate: step 3/5. Its function is as follows. Catalyzes the reversible conversion of 3-phosphohydroxypyruvate to phosphoserine and of 3-hydroxy-2-oxo-4-phosphonooxybutanoate to phosphohydroxythreonine. The chain is Phosphoserine aminotransferase from Pseudomonas syringae pv. tomato (strain ATCC BAA-871 / DC3000).